Reading from the N-terminus, the 136-residue chain is MSIIKEFREFAMRGNVVDLAVGVIIGAAFGKIVSSLVADIIMPPLGLLIGGIDFKQFAVTLRDAQGDIPAVVMHYGVFIQNVFDFLIVAFAIFMAIKLINKLNRKKEEPAAAPAPTKEEVLLTEIRDLLKEQNNRS.

A run of 2 helical transmembrane segments spans residues 10-30 (FAMR…AAFG) and 76-96 (GVFI…FMAI).

Belongs to the MscL family. Homopentamer.

The protein localises to the cell inner membrane. Its function is as follows. Channel that opens in response to stretch forces in the membrane lipid bilayer. May participate in the regulation of osmotic pressure changes within the cell. This Escherichia coli O139:H28 (strain E24377A / ETEC) protein is Large-conductance mechanosensitive channel.